A 343-amino-acid chain; its full sequence is N-acetyl-gamma-glutamyl-phosphate reductase (343 aa).

Cys-147 is an active-site residue.

The protein belongs to the NAGSA dehydrogenase family. Type 1 subfamily.

Its subcellular location is the cytoplasm. The catalysed reaction is N-acetyl-L-glutamate 5-semialdehyde + phosphate + NADP(+) = N-acetyl-L-glutamyl 5-phosphate + NADPH + H(+). Its pathway is amino-acid biosynthesis; L-arginine biosynthesis; N(2)-acetyl-L-ornithine from L-glutamate: step 3/4. Its function is as follows. Catalyzes the NADPH-dependent reduction of N-acetyl-5-glutamyl phosphate to yield N-acetyl-L-glutamate 5-semialdehyde. This is N-acetyl-gamma-glutamyl-phosphate reductase from Listeria welshimeri serovar 6b (strain ATCC 35897 / DSM 20650 / CCUG 15529 / CIP 8149 / NCTC 11857 / SLCC 5334 / V8).